We begin with the raw amino-acid sequence, 552 residues long: Putative transport protein PBPRA2144 (552 aa).

5 helical membrane passes run 4–24 (IALSISILALVAVLGLWIGNW), 26–46 (ICGVGLGIGGVLFGGIFVGHF), 65–85 (FGLILFVYTIGIQVGPGFFAS), 95–115 (AFAALVVLLGCIVAIGLYKIF), and 158–178 (MGYAVAYPFGICGILLTMWIL). RCK C-terminal domains are found at residues 188-276 (KEAE…VIGE) and 279-361 (DASL…IVGN). The next 6 membrane-spanning stretches (helical) occupy residues 371–391 (MLPVFVGIGLGVLLGSIPFYL), 394–414 (FPAAIKLGLAGGPLLVALILA), 439–459 (IVLFLAVVGLKSGGGFVDTLV), 464–484 (LSWMGYGIVITLVPLLTVGFL), 493–513 (YLTICGMLAGSMTDPPALAFA), and 532–552 (PLVMCLRILSPQILALLLWAV).

Belongs to the AAE transporter (TC 2.A.81) family. YidE subfamily.

Its subcellular location is the cell membrane. The sequence is that of Putative transport protein PBPRA2144 from Photobacterium profundum (strain SS9).